The chain runs to 463 residues: Chromosomal replication initiator protein DnaA (463 aa).

The domain I, interacts with DnaA modulators stretch occupies residues 1–90 (MSLSLWQQCL…KPLSQIISQT (90 aa)). Residues 91 to 126 (VTASVSAPSAPIVRVAAPSRPSWDNAAPQPELSYRS) form a domain II region. Residues 127–343 (NVNPKHTFDN…GALNRVIANA (217 aa)) are domain III, AAA+ region. Residues Gly171, Gly173, Lys174, and Thr175 each coordinate ATP. The tract at residues 344–463 (NFTGRAITID…FSNLIRTLSS (120 aa)) is domain IV, binds dsDNA.

This sequence belongs to the DnaA family. Oligomerizes as a right-handed, spiral filament on DNA at oriC.

The protein resides in the cytoplasm. Plays an essential role in the initiation and regulation of chromosomal replication. ATP-DnaA binds to the origin of replication (oriC) to initiate formation of the DNA replication initiation complex once per cell cycle. Binds the DnaA box (a 9 base pair repeat at the origin) and separates the double-stranded (ds)DNA. Forms a right-handed helical filament on oriC DNA; dsDNA binds to the exterior of the filament while single-stranded (ss)DNA is stabiized in the filament's interior. The ATP-DnaA-oriC complex binds and stabilizes one strand of the AT-rich DNA unwinding element (DUE), permitting loading of DNA polymerase. After initiation quickly degrades to an ADP-DnaA complex that is not apt for DNA replication. Binds acidic phospholipids. This Serratia proteamaculans (strain 568) protein is Chromosomal replication initiator protein DnaA.